The sequence spans 232 residues: MNLFDTIRNTIVPIHKEGYVFVAAFFVASLVLGWIAEPLFWVGLVLTAWCAYFFRDPERVTPQDDDLIISPADGKVSAVQSVVPPLELELGKEPMVRISVFMNVFNCHVNRAPVRGRIVNVAYRPGLFLNAEVDKASEDNERNGLVIETSHGKVGVVQIAGMVARRIVCWVKPNEPVDAGERFGLIRFGSRLDIFLPAGFEPRVSVGQTAIAGETVLAEFGSAKGPVLSRRG.

The active-site Schiff-base intermediate with substrate; via pyruvic acid is serine 190. Pyruvic acid (Ser); by autocatalysis is present on serine 190.

Belongs to the phosphatidylserine decarboxylase family. PSD-A subfamily. Heterodimer of a large membrane-associated beta subunit and a small pyruvoyl-containing alpha subunit. Pyruvate is required as a cofactor. In terms of processing, is synthesized initially as an inactive proenzyme. Formation of the active enzyme involves a self-maturation process in which the active site pyruvoyl group is generated from an internal serine residue via an autocatalytic post-translational modification. Two non-identical subunits are generated from the proenzyme in this reaction, and the pyruvate is formed at the N-terminus of the alpha chain, which is derived from the carboxyl end of the proenzyme. The post-translation cleavage follows an unusual pathway, termed non-hydrolytic serinolysis, in which the side chain hydroxyl group of the serine supplies its oxygen atom to form the C-terminus of the beta chain, while the remainder of the serine residue undergoes an oxidative deamination to produce ammonia and the pyruvoyl prosthetic group on the alpha chain.

The protein resides in the cell membrane. It catalyses the reaction a 1,2-diacyl-sn-glycero-3-phospho-L-serine + H(+) = a 1,2-diacyl-sn-glycero-3-phosphoethanolamine + CO2. It functions in the pathway phospholipid metabolism; phosphatidylethanolamine biosynthesis; phosphatidylethanolamine from CDP-diacylglycerol: step 2/2. Catalyzes the formation of phosphatidylethanolamine (PtdEtn) from phosphatidylserine (PtdSer). This is Phosphatidylserine decarboxylase proenzyme from Agrobacterium fabrum (strain C58 / ATCC 33970) (Agrobacterium tumefaciens (strain C58)).